The primary structure comprises 90 residues: Small ribosomal subunit protein uS15 (90 aa).

The protein belongs to the universal ribosomal protein uS15 family. Part of the 30S ribosomal subunit. Forms a bridge to the 50S subunit in the 70S ribosome, contacting the 23S rRNA.

In terms of biological role, one of the primary rRNA binding proteins, it binds directly to 16S rRNA where it helps nucleate assembly of the platform of the 30S subunit by binding and bridging several RNA helices of the 16S rRNA. Functionally, forms an intersubunit bridge (bridge B4) with the 23S rRNA of the 50S subunit in the ribosome. This Wolinella succinogenes (strain ATCC 29543 / DSM 1740 / CCUG 13145 / JCM 31913 / LMG 7466 / NCTC 11488 / FDC 602W) (Vibrio succinogenes) protein is Small ribosomal subunit protein uS15.